Reading from the N-terminus, the 473-residue chain is Cysteine--tRNA ligase (473 aa).

Cys-30 contributes to the Zn(2+) binding site. Residues 32–42 (MTVYDYCHIGH) carry the 'HIGH' region motif. Zn(2+)-binding residues include Cys-213, His-238, and Glu-242. The 'KMSKS' region signature appears at 270–274 (KMSKS). Lys-273 contacts ATP.

This sequence belongs to the class-I aminoacyl-tRNA synthetase family. As to quaternary structure, monomer. It depends on Zn(2+) as a cofactor.

Its subcellular location is the cytoplasm. It carries out the reaction tRNA(Cys) + L-cysteine + ATP = L-cysteinyl-tRNA(Cys) + AMP + diphosphate. The chain is Cysteine--tRNA ligase from Acinetobacter baumannii (strain ACICU).